A 224-amino-acid polypeptide reads, in one-letter code: E3 ubiquitin-protein ligase TRIM48 (224 aa).

An RING-type zinc finger spans residues 31–72 (CPICMNYFIDPVTIDCGHSFCRPCFYLNWQDIPILTQCFECI). The B box-type zinc-finger motif lies at 104–145 (SEEQMCGIHRETKKMFCEVDRSLLCLLCSSSQEHRYHRHCPA). Residues cysteine 109, histidine 112, cysteine 131, and histidine 137 each contribute to the Zn(2+) site.

The protein belongs to the TRIM/RBCC family. As to quaternary structure, interacts with PRMT1; the interaction leads to ubiquitination of PRMT1 by TRIM48. Interacts with MAP3K5. Interacts with STRAP.

The protein localises to the cytoplasm. Its subcellular location is the cytosol. It carries out the reaction S-ubiquitinyl-[E2 ubiquitin-conjugating enzyme]-L-cysteine + [acceptor protein]-L-lysine = [E2 ubiquitin-conjugating enzyme]-L-cysteine + N(6)-ubiquitinyl-[acceptor protein]-L-lysine.. E3 ubiquitin-protein ligase which promotes K48-linked polyubiquitination of protein methyltransferase PRMT1, leading to PRMT1 degradation. This suppresses methylation of the PRMT1 substrate MAP3K5/ASK1, promoting its activation and increasing MAP3K5-dependent cell death induced by oxidative stress. TRIM48-mediated ubiquitination of PRMT1 also suppresses methylation of FOXO1 by PRMT1, leading to inhibition of FOXO1 transcriptional activity. In Homo sapiens (Human), this protein is E3 ubiquitin-protein ligase TRIM48.